Reading from the N-terminus, the 399-residue chain is Endo-1,4-beta-xylanase C (399 aa).

Positions 1 to 20 (MFKFSASLAALAALVPFVAA) are cleaved as a signal peptide. A CBM1 domain is found at 21 to 56 (QSPEWGQCGGIGWTGPTTCVAGTTCVESNPYYSQCL). In terms of domain architecture, GH10 spans 81–396 (SAKLHTLAKA…KPAFNGIAAG (316 aa)). E212 acts as the Proton donor in catalysis. E318 functions as the Nucleophile in the catalytic mechanism. The cysteines at positions 346 and 352 are disulfide-linked.

The protein belongs to the glycosyl hydrolase 10 (cellulase F) family.

It is found in the secreted. The catalysed reaction is Endohydrolysis of (1-&gt;4)-beta-D-xylosidic linkages in xylans.. Its pathway is glycan degradation; xylan degradation. Its function is as follows. Endo-1,4-beta-xylanase involved in the hydrolysis of xylan, a major structural heterogeneous polysaccharide found in plant biomass representing the second most abundant polysaccharide in the biosphere, after cellulose. This Phanerodontia chrysosporium (White-rot fungus) protein is Endo-1,4-beta-xylanase C (xynC).